Here is a 115-residue protein sequence, read N- to C-terminus: Photosystem II reaction center Psb28 protein (115 aa).

This sequence belongs to the Psb28 family. As to quaternary structure, part of the photosystem II complex.

The protein localises to the plastid. It is found in the chloroplast thylakoid membrane. In Phaeodactylum tricornutum (strain CCAP 1055/1), this protein is Photosystem II reaction center Psb28 protein.